Here is a 152-residue protein sequence, read N- to C-terminus: Transcriptional regulator MraZ (152 aa).

SpoVT-AbrB domains are found at residues 5 to 52 (ATLV…PLPE) and 81 to 124 (ASEC…DEQT).

It belongs to the MraZ family. In terms of assembly, forms oligomers.

Its subcellular location is the cytoplasm. It localises to the nucleoid. Its function is as follows. Negatively regulates its own expression and that of the subsequent genes in the proximal part of the division and cell wall (dcw) gene cluster. Acts by binding directly to DNA. May also regulate the expression of genes outside the dcw cluster. The chain is Transcriptional regulator MraZ from Pectobacterium carotovorum subsp. carotovorum (strain PC1).